Consider the following 85-residue polypeptide: Transcriptional repressor protein KorC (85 aa).

The segment at residues 28–47 is a DNA-binding region (H-T-H motif); it reads VLHLAGLTGGQAARILGLGA.

Acts with KorA as corepressor in the control of the kilC and kilE operons. The sequence is that of Transcriptional repressor protein KorC (korC) from Escherichia coli.